The sequence spans 33 residues: Ice-structuring protein SS-3 (33 aa).

Belongs to the type-I AFP family.

In terms of biological role, antifreeze proteins lower the blood freezing point. The protein is Ice-structuring protein SS-3 of Myoxocephalus scorpius (Shorthorn sculpin).